The chain runs to 372 residues: tRNA N6-adenosine threonylcarbamoyltransferase (372 aa).

A divalent metal cation is bound by residues H133, H137, and Y154. Substrate-binding positions include Y154 to G158, D186, G201, E205, and N301. D330 provides a ligand contact to a divalent metal cation.

Belongs to the KAE1 / TsaD family. Component of the EKC/KEOPS complex composed of at least BUD32, CGI121, GON7, KAE1 and PCC1; the whole complex dimerizes. It depends on a divalent metal cation as a cofactor.

It localises to the cytoplasm. It is found in the nucleus. It catalyses the reaction L-threonylcarbamoyladenylate + adenosine(37) in tRNA = N(6)-L-threonylcarbamoyladenosine(37) in tRNA + AMP + H(+). In terms of biological role, component of the EKC/KEOPS complex that is required for the formation of a threonylcarbamoyl group on adenosine at position 37 (t(6)A37) in tRNAs that read codons beginning with adenine. The complex is probably involved in the transfer of the threonylcarbamoyl moiety of threonylcarbamoyl-AMP (TC-AMP) to the N6 group of A37. KAE1 likely plays a direct catalytic role in this reaction, but requires other protein(s) of the complex to fulfill this activity. The EKC/KEOPS complex also promotes both telomere uncapping and telomere elongation. The complex is required for efficient recruitment of transcriptional coactivators. This chain is tRNA N6-adenosine threonylcarbamoyltransferase, found in Candida albicans (strain SC5314 / ATCC MYA-2876) (Yeast).